The chain runs to 207 residues: Putative acetyltransferase C18B11.09c (207 aa).

It belongs to the transferase hexapeptide repeat family.

The protein is Putative acetyltransferase C18B11.09c of Schizosaccharomyces pombe (strain 972 / ATCC 24843) (Fission yeast).